Here is a 492-residue protein sequence, read N- to C-terminus: N-succinylglutamate 5-semialdehyde dehydrogenase (492 aa).

NAD(+) is bound at residue glycine 220 to glycine 225. Catalysis depends on residues glutamate 243 and cysteine 277.

Belongs to the aldehyde dehydrogenase family. AstD subfamily.

The catalysed reaction is N-succinyl-L-glutamate 5-semialdehyde + NAD(+) + H2O = N-succinyl-L-glutamate + NADH + 2 H(+). It participates in amino-acid degradation; L-arginine degradation via AST pathway; L-glutamate and succinate from L-arginine: step 4/5. Catalyzes the NAD-dependent reduction of succinylglutamate semialdehyde into succinylglutamate. This chain is N-succinylglutamate 5-semialdehyde dehydrogenase, found in Escherichia coli O81 (strain ED1a).